Consider the following 351-residue polypeptide: Histidine protein kinase SaeS (351 aa).

The next 2 membrane-spanning stretches (helical) occupy residues Ile9–Ile29 and Thr40–Ile60. The HAMP domain maps to Asn61 to Asn114. The Histidine kinase domain occupies Asn129–Asp348. Position 132 is a phosphohistidine; by autocatalysis (His132).

Autophosphorylated.

Its subcellular location is the cell membrane. The catalysed reaction is ATP + protein L-histidine = ADP + protein N-phospho-L-histidine.. Its function is as follows. Member of the two-component regulatory system SaeR/SaeS involved in the regulation of staphylococcal virulence factors in a strain-dependent fashion. Probably functions as a membrane-associated protein kinase that upon sensing the appropriate signal, autophosphorylates and in turn activates the cytosolic response regulator SaeR. SaeR/SaeS activates the expression of exoproteins involved in adhesion and invasion of host cells, including hemolysins (hla, hlb, hlgC), coa, DNase, spa and cell wall-associated proteins (emp, eap, fnbA, fnbB, efb). Represses the expression of type 5 capsular polysaccharide (cap operon). Also modulates the expression of several other genes. The polypeptide is Histidine protein kinase SaeS (saeS) (Staphylococcus aureus (strain Newman)).